The sequence spans 446 residues: Exodeoxyribonuclease 7 large subunit (446 aa).

This sequence belongs to the XseA family. In terms of assembly, heterooligomer composed of large and small subunits.

It is found in the cytoplasm. The enzyme catalyses Exonucleolytic cleavage in either 5'- to 3'- or 3'- to 5'-direction to yield nucleoside 5'-phosphates.. Bidirectionally degrades single-stranded DNA into large acid-insoluble oligonucleotides, which are then degraded further into small acid-soluble oligonucleotides. This chain is Exodeoxyribonuclease 7 large subunit, found in Streptococcus pneumoniae serotype 4 (strain ATCC BAA-334 / TIGR4).